The primary structure comprises 487 residues: Calcium-dependent mitochondrial ATP-magnesium/phosphate carrier protein 2 (487 aa).

The Mitochondrial intermembrane segment spans residues 1–211; the sequence is MEATKSSKQN…ISKHIKRSNY (211 aa). EF-hand domains are found at residues 36–71, 72–107, 108–138, and 139–174; these read ERDL…LQIP, SGYK…KELE, LYRI…AGIE, and IKDE…YPHE. The Ca(2+) site is built by Asp-85, Asn-87, Asp-89, Arg-91, and Glu-96. Residues Asp-152, Asp-154, Asp-156, and Glu-163 each contribute to the Ca(2+) site. Solcar repeat units follow at residues 206-289, 301-389, and 400-483; these read IKRS…FKNA, IGTT…LKDL, and PGPL…MKKS. The helical transmembrane segment at 212-229 threads the bilayer; sequence FIAGGIAGAASRTATAPL. Residues 230–263 lie on the Mitochondrial matrix side of the membrane; the sequence is DRLKVLLQIQKTDARIREAIKLIWKQGGVRGFFR. Residues 264–283 traverse the membrane as a helical segment; the sequence is GNGLNIVKVAPESAIKFYAY. The Mitochondrial intermembrane segment spans residues 284 to 310; it reads ELFKNAIGENMGEDKADIGTTVRLFAG. A helical membrane pass occupies residues 311 to 324; sequence GMAGAVAQASIYPL. Over 325–363 the chain is Mitochondrial matrix; the sequence is DLVKTRLQTYTSQAGVAVPRLGTLTKDILVHEGPRAFYK. A helical transmembrane segment spans residues 364–383; the sequence is GLFPSLLGIIPYAGIDLAAY. At 384-405 the chain is on the mitochondrial intermembrane side; the sequence is ETLKDLSRTYILQDAEPGPLVQ. A helical membrane pass occupies residues 406–423; it reads LGCGTISGALGATCVYPL. The Mitochondrial matrix portion of the chain corresponds to 424 to 457; sequence QVVRTRMQAERARTSMSGVFRRTISEEGYRALYK. A helical membrane pass occupies residues 458 to 477; that stretch reads GLLPNLLKVVPAASITYMVY. Topologically, residues 478 to 487 are mitochondrial intermembrane; it reads EAMKKSLELD.

It belongs to the mitochondrial carrier (TC 2.A.29) family. In terms of tissue distribution, expressed in flowers, leaves, stems, roots and seedlings, mostly in aerial parts.

Its subcellular location is the mitochondrion inner membrane. Its activity is regulated as follows. Counter-exchange transport activity is saturable and inhibited by pyridoxal-5'-phosphate, EDTA and EGTA. Activated by calcium Ca(2+) and manganese Mn(2+) ions, and slightly by iron Fe(2+) and zinc Zn(2+) ions. Repressed by copper ions Cu(2+) and slightly by magnesium Mg(2+) ions. Magnesium Mg(2+) ions promotes slightly ATP uptake, ATP-Mg(2+) being exchanged with ATP(4-). In terms of biological role, calcium-dependent mitochondrial carrier protein that catalyzes the import of ATP co-transported with metal divalent cations across the mitochondrial inner membrane in exchange for phosphate (Pi). Can transport phosphate, AMP, ADP, ATP, adenosine 5'-phosphosulfate, sulfate and thiosulfate, and, to a lesser extent, other nucleotides. Binds calcium ions Ca(2+). Also mediates calcium uptake. The polypeptide is Calcium-dependent mitochondrial ATP-magnesium/phosphate carrier protein 2 (Arabidopsis thaliana (Mouse-ear cress)).